Reading from the N-terminus, the 416-residue chain is 3-isopropylmalate dehydratase large subunit (416 aa).

[4Fe-4S] cluster is bound by residues cysteine 297, cysteine 357, and cysteine 360.

This sequence belongs to the aconitase/IPM isomerase family. LeuC type 2 subfamily. In terms of assembly, heterodimer of LeuC and LeuD. It depends on [4Fe-4S] cluster as a cofactor.

The enzyme catalyses (2R,3S)-3-isopropylmalate = (2S)-2-isopropylmalate. It functions in the pathway amino-acid biosynthesis; L-leucine biosynthesis; L-leucine from 3-methyl-2-oxobutanoate: step 2/4. Catalyzes the isomerization between 2-isopropylmalate and 3-isopropylmalate, via the formation of 2-isopropylmaleate. In Methanoregula boonei (strain DSM 21154 / JCM 14090 / 6A8), this protein is 3-isopropylmalate dehydratase large subunit.